The sequence spans 182 residues: ATP-dependent protease subunit HslV (182 aa).

Residue Thr-10 is part of the active site. 3 residues coordinate Na(+): Ala-166, Cys-169, and Ser-172.

This sequence belongs to the peptidase T1B family. HslV subfamily. In terms of assembly, a double ring-shaped homohexamer of HslV is capped on each side by a ring-shaped HslU homohexamer. The assembly of the HslU/HslV complex is dependent on binding of ATP.

It is found in the cytoplasm. It catalyses the reaction ATP-dependent cleavage of peptide bonds with broad specificity.. Allosterically activated by HslU binding. Its function is as follows. Protease subunit of a proteasome-like degradation complex believed to be a general protein degrading machinery. This Rickettsia prowazekii (strain Madrid E) protein is ATP-dependent protease subunit HslV.